Reading from the N-terminus, the 358-residue chain is DNA replication and repair protein RecF (358 aa).

Position 30-37 (30-37) interacts with ATP; that stretch reads GANGSGKT.

It belongs to the RecF family.

It is found in the cytoplasm. Its function is as follows. The RecF protein is involved in DNA metabolism; it is required for DNA replication and normal SOS inducibility. RecF binds preferentially to single-stranded, linear DNA. It also seems to bind ATP. The chain is DNA replication and repair protein RecF from Acinetobacter baylyi (strain ATCC 33305 / BD413 / ADP1).